The primary structure comprises 691 residues: Protein simr-1 (691 aa).

A Tudor; degenerate domain is found at 139–204; it reads EAEITPGTIY…TLFHLGKFTI (66 aa). Disordered regions lie at residues 547-573 and 588-618; these read TGPC…DMSI and DNLN…TTNS. 2 stretches are compositionally biased toward polar residues: residues 549–573 and 588–598; these read PCGS…DMSI and DNLNDTENWPN.

The protein resides in the cytoplasm. Its subcellular location is the perinuclear region. In terms of biological role, acts downstream of piRNA production to promote mediator complex-dependent endogenous siRNA biogenesis from piRNA-target mRNAs in the RNA interference pathway in germ cells. Not required to identify target mRNA by the piRNA pathway. Plays a role in both spermatogenesis and oogenesis and in maintaining fertility over multiple generations, probably by directing mutator-dependent silencing to piRNA-targeted genes. This Caenorhabditis elegans protein is Protein simr-1.